The chain runs to 343 residues: Dihydroorotate dehydrogenase (quinone) (343 aa).

Residues 61 to 65 (AGLDK) and T85 each bind FMN. K65 lines the substrate pocket. 110–114 (NRMGF) serves as a coordination point for substrate. Positions 138 and 171 each coordinate FMN. N171 contributes to the substrate binding site. Residue S174 is the Nucleophile of the active site. A substrate-binding site is contributed by N176. FMN is bound by residues K216 and T244. 245 to 246 (NT) is a substrate binding site. Residues G267, G296, and 317–318 (YS) each bind FMN.

This sequence belongs to the dihydroorotate dehydrogenase family. Type 2 subfamily. Monomer. It depends on FMN as a cofactor.

It localises to the cell membrane. The enzyme catalyses (S)-dihydroorotate + a quinone = orotate + a quinol. The protein operates within pyrimidine metabolism; UMP biosynthesis via de novo pathway; orotate from (S)-dihydroorotate (quinone route): step 1/1. In terms of biological role, catalyzes the conversion of dihydroorotate to orotate with quinone as electron acceptor. In Pseudomonas syringae pv. tomato (strain ATCC BAA-871 / DC3000), this protein is Dihydroorotate dehydrogenase (quinone).